The chain runs to 347 residues: Endo-1,4-beta-xylanase 3 (347 aa).

The N-terminal stretch at 1–16 (MKANVILCLLAPLVAA) is a signal peptide. Positions 17–45 (LPTETIHLDPELAALRANLTERTADLWDR) are excised as a propeptide. Pyrrolidone carboxylic acid is present on Gln46. Positions 46–345 (QASQSIDQLI…KPAYNSIVGI (300 aa)) constitute a GH10 domain. The active-site Proton donor is Glu176. The Nucleophile role is filled by Glu282. Cys300 and Cys306 are oxidised to a cystine.

It belongs to the glycosyl hydrolase 10 (cellulase F) family. In terms of assembly, monomer. In terms of processing, not glycosylated.

Its subcellular location is the secreted. It catalyses the reaction Endohydrolysis of (1-&gt;4)-beta-D-xylosidic linkages in xylans.. It functions in the pathway glycan degradation; xylan degradation. Glycoside hydrolase involved in the hydrolysis of xylan, a major plant cell wall hemicellulose made up of 1,4-beta-linked D-xylopyranose residues. Catalyzes the endohydrolysis of the main-chain 1,4-beta-glycosidic bonds connecting the xylose subunits yielding various xylooligosaccharides and xylose. Produces xylobiose and xylotriose as the main degradation products. The polypeptide is Endo-1,4-beta-xylanase 3 (xyn3) (Hypocrea jecorina (strain QM6a) (Trichoderma reesei)).